The primary structure comprises 412 residues: MISQIDKAELLERFLHYVSFHTQSKPNAKHSPSSVGQMKLAMQLQKELIQLGLENVEVSKYAVVTAFLPANDPNLTKTIGLVAHLDTSPQCSGKNVRPEVIEEYRGGDIALGIGEEFISPVYYSFMQKLVGQTLIVTDGTTLLGADNKAGIAEIMTALSILQKENIPHCNIRVAFTPDEEIGLGIHYFPMEKFSCDWAYTIDGGEVGELEYENFNAATAKVRFFGRNIHTGYAKGKMLNALTLACEFQQVFPVDEVPEKTDGKAGFYHLEDFSGDIEQVELTYLIRDFDEQNFAQRKAFIKNQVEKFNAKKGLKKPIELEIQDSYQNMYDVVKNVPQSIELADRAMKAVGIKPNHKPIRGGTDGAFLASKGLACPNIFTGGYNFHSKHELVSLQGMENTVQVIIEMLKCKDL.

His-84 provides a ligand contact to Zn(2+). The active site involves Asp-86. A Zn(2+)-binding site is contributed by Asp-146. The Proton acceptor role is filled by Glu-179. Zn(2+) contacts are provided by Glu-180, Asp-202, and His-385.

The protein belongs to the peptidase M20B family. The cofactor is Zn(2+).

It localises to the cytoplasm. The enzyme catalyses Release of the N-terminal residue from a tripeptide.. Functionally, cleaves the N-terminal amino acid of tripeptides. This Haemophilus influenzae (strain 86-028NP) protein is Peptidase T.